Reading from the N-terminus, the 132-residue chain is Myelin P2 protein (132 aa).

Position 2 is an N-acetylserine (S2). R107 provides a ligand contact to (9Z)-octadecenoate. Residue R107 coordinates hexadecanoate. The cysteines at positions 118 and 125 are disulfide-linked. 127-129 (RIY) provides a ligand contact to (9Z)-octadecenoate. 127–129 (RIY) provides a ligand contact to hexadecanoate.

The protein belongs to the calycin superfamily. Fatty-acid binding protein (FABP) family. Monomer.

The protein localises to the cytoplasm. Its function is as follows. May play a role in lipid transport protein in Schwann cells. May bind cholesterol. This chain is Myelin P2 protein, found in Sus scrofa (Pig).